The following is a 1081-amino-acid chain: Zinc finger protein 827 (1081 aa).

Residues 1 to 10 show a composition bias toward basic and acidic residues; the sequence is MPRRKQEQPK. The interval 1 to 14 is mediates direct interaction with RBBP4; it reads MPRRKQEQPKRLPS. The tract at residues 1–77 is disordered; sequence MPRRKQEQPK…DTSLGSTTPS (77 aa). The RRK motif; mediates NuRD recruitment to telomeres signature appears at 3–5; that stretch reads RRK. Polar residues predominate over residues 62 to 77; it reads EQSTSPDTSLGSTTPS. Glycyl lysine isopeptide (Lys-Gly) (interchain with G-Cter in SUMO2) cross-links involve residues Lys-176, Lys-216, and Lys-226. Disordered stretches follow at residues 259–278 and 307–348; these read KVSE…ASSF and SSLL…SLEL. Residues 327–344 show a composition bias toward pro residues; sequence VTPPPPPPPPPPPPPPPQ. Residues Lys-360 and Lys-372 each participate in a glycyl lysine isopeptide (Lys-Gly) (interchain with G-Cter in SUMO2) cross-link. 3 consecutive C2H2-type zinc fingers follow at residues 374–396, 402–424, and 433–455; these read FQCP…MVIH, HQCP…MKVH, and FQCQ…MRCH. Residues Lys-466, Lys-475, Lys-523, Lys-549, Lys-580, Lys-587, Lys-597, Lys-634, Lys-639, and Lys-658 each participate in a glycyl lysine isopeptide (Lys-Gly) (interchain with G-Cter in SUMO2) cross-link. Lys-673 is covalently cross-linked (Glycyl lysine isopeptide (Lys-Gly) (interchain with G-Cter in SUMO1); alternate). A Glycyl lysine isopeptide (Lys-Gly) (interchain with G-Cter in SUMO2); alternate cross-link involves residue Lys-673. Glycyl lysine isopeptide (Lys-Gly) (interchain with G-Cter in SUMO2) cross-links involve residues Lys-704, Lys-710, Lys-742, Lys-778, and Lys-798. 2 C2H2-type zinc fingers span residues 817–839 and 845–867; these read FPCD…LSLH and YKCH…LTVH. Glycyl lysine isopeptide (Lys-Gly) (interchain with G-Cter in SUMO2) cross-links involve residues Lys-870 and Lys-891. 2 C2H2-type zinc fingers span residues 897 to 919 and 929 to 952; these read YSCH…MSLH and ICCT…GTKH. A compositionally biased stretch (basic and acidic residues) spans 947–960; that stretch reads HIGTKHTGEDRKTP. The disordered stretch occupies residues 947-996; it reads HIGTKHTGEDRKTPSESNSPSSSSLSALSDSANSKDDSDGSQKNKGGNNL. A Glycyl lysine isopeptide (Lys-Gly) (interchain with G-Cter in SUMO2) cross-link involves residue Lys-958. The span at 961–978 shows a compositional bias: low complexity; that stretch reads SESNSPSSSSLSALSDSA. Positions 979 to 988 are enriched in basic and acidic residues; the sequence is NSKDDSDGSQ. Lys-1014 is covalently cross-linked (Glycyl lysine isopeptide (Lys-Gly) (interchain with G-Cter in SUMO2)). 2 consecutive C2H2-type zinc fingers follow at residues 1019–1041 and 1047–1069; these read FECV…LQIH and FECD…KKCH.

Belongs to the krueppel C2H2-type zinc-finger protein family. Part of a transcription inhibitory ribonucleoprotein complex composed at least of the circular RNA circZNF827, HNRNPK and HNRNPL. Interacts with the nucleosome remodeling and histone deacetylase/NuRD complex. Interacts with RBBP4; the interaction is direct and recruits RBBP4, a component of the NuRD complex, to telomeres.

The protein localises to the nucleus. It localises to the chromosome. It is found in the telomere. As part of a ribonucleoprotein complex composed at least of HNRNPK, HNRNPL and the circular RNA circZNF827 that nucleates the complex on chromatin, may negatively regulate the transcription of genes involved in neuronal differentiation. Could also recruit the nucleosome remodeling and histone deacetylase/NuRD complex to telomeric regions of chromosomes to regulate chromatin remodeling as part of telomere maintenance. The polypeptide is Zinc finger protein 827 (ZNF827) (Homo sapiens (Human)).